Here is a 297-residue protein sequence, read N- to C-terminus: Acetyl-coenzyme A carboxylase carboxyl transferase subunit beta (297 aa).

In terms of domain architecture, CoA carboxyltransferase N-terminal spans 27 to 296 (LWHKCPSCEA…PEQAREAAAV (270 aa)). Residues Cys-31, Cys-34, Cys-50, and Cys-53 each contribute to the Zn(2+) site. Residues 31–53 (CPSCEAVLYRPELEKTLDVCPKC) form a C4-type zinc finger.

The protein belongs to the AccD/PCCB family. In terms of assembly, acetyl-CoA carboxylase is a heterohexamer composed of biotin carboxyl carrier protein (AccB), biotin carboxylase (AccC) and two subunits each of ACCase subunit alpha (AccA) and ACCase subunit beta (AccD). Zn(2+) serves as cofactor.

It localises to the cytoplasm. The catalysed reaction is N(6)-carboxybiotinyl-L-lysyl-[protein] + acetyl-CoA = N(6)-biotinyl-L-lysyl-[protein] + malonyl-CoA. It participates in lipid metabolism; malonyl-CoA biosynthesis; malonyl-CoA from acetyl-CoA: step 1/1. Functionally, component of the acetyl coenzyme A carboxylase (ACC) complex. Biotin carboxylase (BC) catalyzes the carboxylation of biotin on its carrier protein (BCCP) and then the CO(2) group is transferred by the transcarboxylase to acetyl-CoA to form malonyl-CoA. The chain is Acetyl-coenzyme A carboxylase carboxyl transferase subunit beta from Pseudomonas putida (strain GB-1).